Consider the following 1203-residue polypeptide: Rho GTPase-activating protein gacGG (1203 aa).

7 RCC1 repeats span residues 52–104 (TGEL…AIME), 106–148 (GLLY…VVAD), 155–204 (KRSV…AIVE), 206–255 (NEVF…ARSG), 257–298 (GNVC…VLSE), 299–359 (KGEI…EGRN), and 361–410 (LSVY…YLRG). A disordered region spans residues 316–343 (KLDVNSSPNINSSSGTTTPTTNTTTTTK). The span at 320-343 (NSSPNINSSSGTTTPTTNTTTTTK) shows a compositional bias: low complexity. Positions 381–594 (VDIAESMRRK…TIMKQYPLME (214 aa)) constitute a Rho-GAP domain. Residues 649–679 (TLEIKNNQNNQNNQKENNNNNNNINNSNNNN) are a coiled coil. Disordered stretches follow at residues 657 to 725 (NNQN…TGNI), 746 to 789 (KDGN…NLSP), and 831 to 852 (FANS…LIGS). Composition is skewed to low complexity over residues 746-788 (KDGN…PNLS) and 833-852 (NSGS…LIGS). Residues 995–1078 (FDLLEKSMTE…ISNQNLSRVN (84 aa)) are a coiled coil.

The protein localises to the cytoplasm. Functionally, rho GTPase-activating protein involved in the signal transduction pathway. The chain is Rho GTPase-activating protein gacGG (gacGG) from Dictyostelium discoideum (Social amoeba).